The following is a 410-amino-acid chain: Elongation factor Tu (410 aa).

The 210-residue stretch at 10–219 (KTHVNVGTIG…ALDTYIPDPV (210 aa)) folds into the tr-type G domain. GTP contacts are provided by residues 19–26 (GHVDHGKT), 88–92 (DCPGH), and 143–146 (NKCD). T26 is a Mg(2+) binding site.

The protein belongs to the TRAFAC class translation factor GTPase superfamily. Classic translation factor GTPase family. EF-Tu/EF-1A subfamily. Monomer.

It is found in the cytoplasm. It carries out the reaction GTP + H2O = GDP + phosphate + H(+). In terms of biological role, GTP hydrolase that promotes the GTP-dependent binding of aminoacyl-tRNA to the A-site of ribosomes during protein biosynthesis. This chain is Elongation factor Tu, found in Brachyspira hyodysenteriae (Treponema hyodysenteriae).